The chain runs to 534 residues: Probable cytochrome c oxidase subunit 1 (534 aa).

Transmembrane regions (helical) follow at residues 35-55 (IMYI…SLLF), 76-96 (VLIT…ALFS), 97-117 (GFGN…FPRL), 120-140 (ISFW…FIDG), 165-185 (VAIF…INLI), 202-222 (PLFV…MPVL), 254-274 (LFWF…FGIV), and 286-306 (IFGY…GFIV). Position 81 (His81) interacts with Fe(II)-heme a. Residues His260 and Tyr264 each contribute to the Cu cation site. The segment at residues 260-264 (HPEVY) is a cross-link (1'-histidyl-3'-tyrosine (His-Tyr)). Cu cation-binding residues include His309 and His310. 2 helical membrane passes run 320 to 340 (ALIY…IKIF) and 357 to 377 (MLFA…GIIL). Residue His395 coordinates heme a3. 3 helical membrane-spanning segments follow: residues 396–416 (FHYT…YYWF), 433–453 (FWIT…LGLA), and 475–495 (IGAG…FYTL). His397 lines the Fe(II)-heme a pocket.

The protein belongs to the heme-copper respiratory oxidase family.

It is found in the cell membrane. The enzyme catalyses 4 Fe(II)-[cytochrome c] + O2 + 8 H(+)(in) = 4 Fe(III)-[cytochrome c] + 2 H2O + 4 H(+)(out). It functions in the pathway energy metabolism; oxidative phosphorylation. Its function is as follows. Cytochrome c oxidase is the component of the respiratory chain that catalyzes the reduction of oxygen to water. Subunits 1-3 form the functional core of the enzyme complex. CO I is the catalytic subunit of the enzyme. Electrons originating in cytochrome c are transferred via the copper A center of subunit 2 and heme A of subunit 1 to the bimetallic center formed by heme A3 and copper B. This chain is Probable cytochrome c oxidase subunit 1 (ctaD), found in Rickettsia prowazekii (strain Madrid E).